The following is a 30-amino-acid chain: Cyclotide hyen-E (30 aa).

Positions 1-30 (GVPCGESCVYIPCFTGIINCSCRDKVCYNN) form a cross-link, cyclopeptide (Gly-Asn). Disulfide bonds link cysteine 4–cysteine 20, cysteine 8–cysteine 22, and cysteine 13–cysteine 27.

This is a cyclic peptide. Detected in stems (at protein level).

Probably participates in a plant defense mechanism. Has cytotoxic activity against HUVEC cells (LC(50)= 2.17 uM) and various cancer cells including HeLa (LC(50)= 3.05 uM), MCF-7 and K562. Displays very weak hemolytic activity. Binds to and induces leakage in phospholipd membranes, particularly ones containing 1-palmitoyl-2-oleophosphatidylethanolamine (POPE). This Pigea enneasperma (Spade flower) protein is Cyclotide hyen-E.